Here is a 142-residue protein sequence, read N- to C-terminus: Large ribosomal subunit protein uL11 (142 aa).

The protein belongs to the universal ribosomal protein uL11 family. Part of the ribosomal stalk of the 50S ribosomal subunit. Interacts with L10 and the large rRNA to form the base of the stalk. L10 forms an elongated spine to which L12 dimers bind in a sequential fashion forming a multimeric L10(L12)X complex. Post-translationally, one or more lysine residues are methylated.

In terms of biological role, forms part of the ribosomal stalk which helps the ribosome interact with GTP-bound translation factors. This Bartonella henselae (strain ATCC 49882 / DSM 28221 / CCUG 30454 / Houston 1) (Rochalimaea henselae) protein is Large ribosomal subunit protein uL11.